The following is a 220-amino-acid chain: Fructose-6-phosphate aldolase 1 (220 aa).

Lysine 85 serves as the catalytic Schiff-base intermediate with substrate.

It belongs to the transaldolase family. Type 3A subfamily. Homodecamer. Five subunits are arranged as a pentamer, and two ring-like pentamers pack like a donut to form the decamer.

It is found in the cytoplasm. It catalyses the reaction beta-D-fructose 6-phosphate = dihydroxyacetone + D-glyceraldehyde 3-phosphate. Its activity is regulated as follows. Inhibited by glycerol, inorganic phosphate and arabinose 5-phosphate. Catalyzes the reversible formation of fructose 6-phosphate from dihydroxyacetone (DHA) and D-glyceraldehyde 3-phosphate via an aldolization reaction. Can utilize several aldehydes as acceptor compounds in vitro, and hydroxyacetone (HA) or 1-hydroxy-butan-2-one as alternative donor substrate. Is also able to catalyze the direct stereoselective self-aldol addition of glycolaldehyde to furnish D-(-)-threose, and cross-aldol reactions of glycolaldehyde to other aldehyde acceptors. Is not able to cleave fructose, fructose 1-phosphate, glucose 6-phosphate, sedoheptulose 1,7-bisphosphate, xylulose 5-phosphate, ribulose 5-phosphate, and fructose 1,6-bisphosphate; cannot use dihydroxyacetone phosphate as donor compound nor D-glyceraldehyde as acceptor. Does not display transaldolase activity. The chain is Fructose-6-phosphate aldolase 1 (fsaA) from Escherichia coli (strain K12).